Here is a 274-residue protein sequence, read N- to C-terminus: Light-independent protochlorophyllide reductase iron-sulfur ATP-binding protein (274 aa).

Residues 12 to 17 (GIGKST) and K41 contribute to the ATP site. S16 lines the Mg(2+) pocket. C97 and C131 together coordinate [4Fe-4S] cluster.

Belongs to the NifH/BchL/ChlL family. Homodimer. Protochlorophyllide reductase is composed of three subunits; BchL, BchN and BchB. Requires [4Fe-4S] cluster as cofactor.

It catalyses the reaction chlorophyllide a + oxidized 2[4Fe-4S]-[ferredoxin] + 2 ADP + 2 phosphate = protochlorophyllide a + reduced 2[4Fe-4S]-[ferredoxin] + 2 ATP + 2 H2O. It functions in the pathway porphyrin-containing compound metabolism; bacteriochlorophyll biosynthesis (light-independent). In terms of biological role, component of the dark-operative protochlorophyllide reductase (DPOR) that uses Mg-ATP and reduced ferredoxin to reduce ring D of protochlorophyllide (Pchlide) to form chlorophyllide a (Chlide). This reaction is light-independent. The L component serves as a unique electron donor to the NB-component of the complex, and binds Mg-ATP. The chain is Light-independent protochlorophyllide reductase iron-sulfur ATP-binding protein from Chloroherpeton thalassium (strain ATCC 35110 / GB-78).